Reading from the N-terminus, the 586-residue chain is Exocyst complex component EXO70A3 (586 aa).

2 N-linked (GlcNAc...) asparagine glycosylation sites follow: Asn-65 and Asn-106. Residues 119-149 (CLPSNLRPPSDDEGSDGKSHDPQSNGLGKTD) are disordered. The helical transmembrane segment at 258–278 (FAEITTISFGMLLSFGYAIAI) threads the bilayer. N-linked (GlcNAc...) asparagine glycans are attached at residues Asn-321 and Asn-487.

This sequence belongs to the EXO70 family. As to quaternary structure, subunit of the exocyst complex. In terms of tissue distribution, confined to the outer layer of the columella cells in the root tips of young seedlings.

Its subcellular location is the membrane. Its function is as follows. Component of the exocyst complex involved in the docking of exocytic vesicles with fusion sites on the plasma membrane during regulated or polarized secretion. Involved in PIN4 exocytosis and gravitropic responses in columella cells. By monitoring PIN4 distribution in columella cells, modulates auxin repartition and subsequently regulates the root system architecture (RSA), thus being a component of the auxin-dependent root directional growth (ARD). The polypeptide is Exocyst complex component EXO70A3 (Arabidopsis thaliana (Mouse-ear cress)).